Here is a 582-residue protein sequence, read N- to C-terminus: PCNA-interacting partner (582 aa).

Polar residues-rich tracts occupy residues 471–487 and 501–510; these read GVNS…SSGN and KSSSLTGNTS. The segment at 471 to 514 is disordered; it reads GVNSSVGRPTIGTSSGNVHLGRSEKEKVARKSSSLTGNTSSKRK.

Belongs to the PARI family. In terms of assembly, interacts with RAD51 and PCNA. Interacts with PARP1. Interacts with TASOR.

The protein localises to the cytoplasm. It is found in the nucleus. Its function is as follows. Required to suppress inappropriate homologous recombination, thereby playing a central role DNA repair and in the maintenance of genomic stability. Antagonizes homologous recombination by interfering with the formation of the RAD51-DNA homologous recombination structure. Binds single-strand DNA and poly(A) homopolymers. Positively regulate the poly(ADP-ribosyl)ation activity of PARP1; however such function may be indirect. The protein is PCNA-interacting partner (PARPBP) of Bos taurus (Bovine).